A 317-amino-acid polypeptide reads, in one-letter code: Ribosomal protein L11 methyltransferase (317 aa).

S-adenosyl-L-methionine contacts are provided by threonine 158, glycine 179, aspartate 201, and asparagine 244.

Belongs to the methyltransferase superfamily. PrmA family.

The protein localises to the cytoplasm. It catalyses the reaction L-lysyl-[protein] + 3 S-adenosyl-L-methionine = N(6),N(6),N(6)-trimethyl-L-lysyl-[protein] + 3 S-adenosyl-L-homocysteine + 3 H(+). Functionally, methylates ribosomal protein L11. In Streptococcus pyogenes serotype M4 (strain MGAS10750), this protein is Ribosomal protein L11 methyltransferase.